A 210-amino-acid polypeptide reads, in one-letter code: Guanylate kinase (210 aa).

The Guanylate kinase-like domain maps to 6–186 (GLLGIISAPS…ALIYLQSVIL (181 aa)). Residue 13-20 (APSGAGKS) participates in ATP binding.

Belongs to the guanylate kinase family.

The protein resides in the cytoplasm. It catalyses the reaction GMP + ATP = GDP + ADP. Its function is as follows. Essential for recycling GMP and indirectly, cGMP. This is Guanylate kinase from Blochmanniella floridana.